The chain runs to 483 residues: Glutamate--tRNA ligase (483 aa).

A 'HIGH' region motif is present at residues 9–19 (PSPTGNLHIGT). A 'KMSKS' region motif is present at residues 250–254 (KLSKR). Lys253 lines the ATP pocket.

The protein belongs to the class-I aminoacyl-tRNA synthetase family. Glutamate--tRNA ligase type 1 subfamily. Monomer.

It is found in the cytoplasm. The enzyme catalyses tRNA(Glu) + L-glutamate + ATP = L-glutamyl-tRNA(Glu) + AMP + diphosphate. Its function is as follows. Catalyzes the attachment of glutamate to tRNA(Glu) in a two-step reaction: glutamate is first activated by ATP to form Glu-AMP and then transferred to the acceptor end of tRNA(Glu). This chain is Glutamate--tRNA ligase, found in Synechocystis sp. (strain ATCC 27184 / PCC 6803 / Kazusa).